We begin with the raw amino-acid sequence, 104 residues long: Elicitor peptide 6 (104 aa).

The propeptide occupies 1-81 (MEVNGEEERR…TVEETGFMAR (81 aa)). The segment covering 48-61 (SSSIPPSSSSSSPS) has biased composition (low complexity). The disordered stretch occupies residues 48–104 (SSSIPPSSSSSSPSLVEEEDSGTETVEETGFMARITAVLRRRPRPPPYSSGRPGQNN). Residues 63–74 (VEEEDSGTETVE) are compositionally biased toward acidic residues.

This sequence belongs to the brassicaceae elicitor peptide family.

In terms of biological role, elicitor of plant defense. This is Elicitor peptide 6 (PEP6) from Arabidopsis thaliana (Mouse-ear cress).